A 416-amino-acid polypeptide reads, in one-letter code: Phosphoglycerate kinase (416 aa).

Residues Val-23, Asp-24, Phe-25, Asn-26, Gln-38, Arg-39, Ser-62, His-63, Gly-65, Arg-66, Leu-121, Arg-122, His-168, and Arg-169 each contribute to the (2R)-3-phosphoglycerate site. An ADP-binding site is contributed by Gly-212. Residue Gly-212 coordinates CDP. AMP is bound by residues Ala-213 and Lys-214. Residue Ala-213 coordinates ATP. Ala-213 serves as a coordination point for Mg(2+). CDP is bound at residue Asp-217. Position 217 (Asp-217) interacts with Mg(2+). Lys-218 serves as a coordination point for AMP. ATP is bound at residue Lys-218. Gly-236 contacts ADP. Gly-236 is a binding site for CDP. AMP-binding residues include Gly-237 and Gly-311. ATP-binding residues include Gly-237 and Gly-311. Residues Gly-336 and Phe-341 each contribute to the CDP site. Phe-341 lines the ADP pocket. Glu-342 lines the AMP pocket. 3 residues coordinate ATP: Glu-342, Asp-373, and Thr-374. Asp-373 contacts Mg(2+).

This sequence belongs to the phosphoglycerate kinase family. Monomer. Mg(2+) serves as cofactor.

The protein resides in the cytoplasm. It is found in the mitochondrion. It carries out the reaction (2R)-3-phosphoglycerate + ATP = (2R)-3-phospho-glyceroyl phosphate + ADP. The protein operates within carbohydrate degradation; glycolysis; pyruvate from D-glyceraldehyde 3-phosphate: step 2/5. Catalyzes one of the two ATP producing reactions in the glycolytic pathway via the reversible conversion of 1,3-diphosphoglycerate to 3-phosphoglycerate. Both L- and D- forms of purine and pyrimidine nucleotides can be used as substrates, but the activity is much lower on pyrimidines. Negatively regulates the biosynthesis of acetyl-CoA from pyruvate in the mitochondrion. The protein is Phosphoglycerate kinase (PGK1) of Debaryomyces hansenii (strain ATCC 36239 / CBS 767 / BCRC 21394 / JCM 1990 / NBRC 0083 / IGC 2968) (Yeast).